The following is a 111-amino-acid chain: Ribonuclease P protein component (111 aa).

The protein belongs to the RnpA family. Consists of a catalytic RNA component (M1 or rnpB) and a protein subunit.

It catalyses the reaction Endonucleolytic cleavage of RNA, removing 5'-extranucleotides from tRNA precursor.. In terms of biological role, RNaseP catalyzes the removal of the 5'-leader sequence from pre-tRNA to produce the mature 5'-terminus. It can also cleave other RNA substrates such as 4.5S RNA. The protein component plays an auxiliary but essential role in vivo by binding to the 5'-leader sequence and broadening the substrate specificity of the ribozyme. The protein is Ribonuclease P protein component of Fusobacterium nucleatum subsp. nucleatum (strain ATCC 25586 / DSM 15643 / BCRC 10681 / CIP 101130 / JCM 8532 / KCTC 2640 / LMG 13131 / VPI 4355).